The primary structure comprises 286 residues: ATP synthase gamma chain (286 aa).

Belongs to the ATPase gamma chain family. As to quaternary structure, F-type ATPases have 2 components, CF(1) - the catalytic core - and CF(0) - the membrane proton channel. CF(1) has five subunits: alpha(3), beta(3), gamma(1), delta(1), epsilon(1). CF(0) has three main subunits: a, b and c.

Its subcellular location is the cell membrane. Produces ATP from ADP in the presence of a proton gradient across the membrane. The gamma chain is believed to be important in regulating ATPase activity and the flow of protons through the CF(0) complex. This Malacoplasma penetrans (strain HF-2) (Mycoplasma penetrans) protein is ATP synthase gamma chain.